The chain runs to 408 residues: Chaperonin GroEL (408 aa).

ATP is bound by residues threonine 30–proline 33, lysine 51, and aspartate 87–threonine 91.

This sequence belongs to the chaperonin (HSP60) family. Forms a cylinder of 14 subunits composed of two heptameric rings stacked back-to-back. Interacts with the co-chaperonin GroES.

The protein resides in the cytoplasm. The enzyme catalyses ATP + H2O + a folded polypeptide = ADP + phosphate + an unfolded polypeptide.. Functionally, together with its co-chaperonin GroES, plays an essential role in assisting protein folding. The GroEL-GroES system forms a nano-cage that allows encapsulation of the non-native substrate proteins and provides a physical environment optimized to promote and accelerate protein folding. The chain is Chaperonin GroEL from Rickettsia rickettsii.